Consider the following 351-residue polypeptide: Photosystem II D2 protein (351 aa).

The chain crosses the membrane as a helical span at residues 39–59; sequence CAYMAIGGWLTGTTFATSWYT. Chlorophyll a is bound at residue histidine 116. A helical membrane pass occupies residues 123-139; the sequence is GFMLRQFEIARLVGVRP. Glutamine 128 and asparagine 141 together coordinate pheophytin a. The chain crosses the membrane as a helical span at residues 151-164; the sequence is LFVSVFLIYPLGQS. Histidine 196 serves as a coordination point for chlorophyll a. The helical transmembrane segment at 206 to 226 threads the bilayer; sequence GALLCAIHGATVENTLFEDGD. A plastoquinone is bound by residues histidine 213 and phenylalanine 260. Histidine 213 serves as a coordination point for Fe cation. Residue histidine 267 coordinates Fe cation. The helical transmembrane segment at 277 to 293 threads the bilayer; the sequence is GLWMSAIGVVGLALNLR.

Belongs to the reaction center PufL/M/PsbA/D family. As to quaternary structure, PSII is composed of 1 copy each of membrane proteins PsbA, PsbB, PsbC, PsbD, PsbE, PsbF, PsbH, PsbI, PsbJ, PsbK, PsbL, PsbM, PsbT, PsbX, PsbY, PsbZ, Psb30/Ycf12, peripheral proteins PsbO, CyanoQ (PsbQ), PsbU, PsbV and a large number of cofactors. It forms dimeric complexes. The D1/D2 heterodimer binds P680, chlorophylls that are the primary electron donor of PSII, and subsequent electron acceptors. It shares a non-heme iron and each subunit binds pheophytin, quinone, additional chlorophylls, carotenoids and lipids. There is also a Cl(-1) ion associated with D1 and D2, which is required for oxygen evolution. The PSII complex binds additional chlorophylls, carotenoids and specific lipids. serves as cofactor.

The protein resides in the cellular thylakoid membrane. The catalysed reaction is 2 a plastoquinone + 4 hnu + 2 H2O = 2 a plastoquinol + O2. In terms of biological role, photosystem II (PSII) is a light-driven water:plastoquinone oxidoreductase that uses light energy to abstract electrons from H(2)O, generating O(2) and a proton gradient subsequently used for ATP formation. It consists of a core antenna complex that captures photons, and an electron transfer chain that converts photonic excitation into a charge separation. The D1/D2 (PsbA/PsbD) reaction center heterodimer binds P680, the primary electron donor of PSII as well as several subsequent electron acceptors. D2 is needed for assembly of a stable PSII complex. This Prochlorothrix hollandica protein is Photosystem II D2 protein.